Consider the following 124-residue polypeptide: Thioredoxin domain-containing protein C21C3.12c (124 aa).

In terms of domain architecture, Thioredoxin spans Pro37 to Ile124. The Nucleophile role is filled by Cys39.

This sequence belongs to the thioredoxin family.

The protein localises to the cytoplasm. The protein resides in the nucleus. This Schizosaccharomyces pombe (strain 972 / ATCC 24843) (Fission yeast) protein is Thioredoxin domain-containing protein C21C3.12c.